The primary structure comprises 689 residues: Glycine--tRNA ligase beta subunit (689 aa).

Belongs to the class-II aminoacyl-tRNA synthetase family. As to quaternary structure, tetramer of two alpha and two beta subunits.

It is found in the cytoplasm. The catalysed reaction is tRNA(Gly) + glycine + ATP = glycyl-tRNA(Gly) + AMP + diphosphate. This is Glycine--tRNA ligase beta subunit from Shigella boydii serotype 18 (strain CDC 3083-94 / BS512).